Reading from the N-terminus, the 302-residue chain is MFFRNLTLFRFPTSLDFSQIDSILPNARLRPVGPLEMTSRGFISPFGREEQEVLNQRQGDFLWLTVGSEDKILPASVVNDLLTRKCSEIEEKKGHPPGGRERKRIKDDLIHELLPRAFVKKSRIDAMLDLRYGYVAVDTASRKAAETVISEIRDLLGSFPALPLNAEISIRSMLTSWIAGEPLPEHLNLGDECEMKDATEGGAIIKCQHQALRCEEIDKHLEVGKQVSKLALILDDHVSFVLGDDLVIRKLKFLDGMLDQLEHSDTDGIRAELDARFALMSAEIRRLFLLLEVPLKLSKANN.

It belongs to the RdgC family.

The protein localises to the cytoplasm. It localises to the nucleoid. May be involved in recombination. The sequence is that of Recombination-associated protein RdgC from Xylella fastidiosa (strain 9a5c).